Here is a 273-residue protein sequence, read N- to C-terminus: Giardin subunit beta (273 aa).

Residues 1–19 (MSMFTSTRTLTQTMDKPDD) form a nonhelical region region. A rod region spans residues 20-273 (LTRSATETAV…GGLSMVTKHQ (254 aa)). Coiled coils occupy residues 123 to 175 (DTLN…YDQL) and 211 to 263 (NTKL…SKIQ).

Belongs to the SF-assemblin family. Interacts with BOP1 (via C-terminal WD repeats).

The protein localises to the cytoplasm. The protein resides in the cytoskeleton. In terms of biological role, giardins are involved in parasite attachment to the intestinal mucosa and in the cytoskeletal disassembly and reassembly that marks the transition from infectious trophozoite to transmissible cyst. They may interact with other cytoskeletal proteins such as microtubules in the microribbons or crossbridges, to maintain the integrity of the ventral disk. This chain is Giardin subunit beta, found in Giardia intestinalis (Giardia lamblia).